Reading from the N-terminus, the 465-residue chain is Protein maelstrom (465 aa).

Residues 2–69 constitute a DNA-binding region (HMG box); that stretch reads APKKHSAFMV…ADRAKRERLN (68 aa). 2 disordered regions span residues 373–394 and 419–443; these read NQSEDVLLSSSRPSVESSSYTP and SKHRGLDVSAQRERNAGAWNLPTHS. Over residues 381–391 the composition is skewed to low complexity; that stretch reads SSSRPSVESSS. Over residues 422–433 the composition is skewed to basic and acidic residues; the sequence is RGLDVSAQRERN.

The protein belongs to the maelstrom family.

It is found in the cytoplasm. The protein localises to the nucleus. In terms of biological role, involved both in the piRNA and miRNA metabolic processes. As a component of the meiotic nuage, plays a central role during oogenesis by repressing transposable elements and preventing their mobilization, which is essential for the germline integrity. Repression of transposable elements is mediated via the piRNA metabolic process, which mediates the repression of transposable elements during meiosis by forming complexes composed of piRNAs and Piwi proteins and governs the repression of transposons. As a nuclear component, it is required for proper differentiation in the germline stem cell (GSC) lineage by repressing microRNA-7 (miR-7), thereby acting as an indirect regulator of bag-of-marbles (Bam). Acts by binding to the promoter of miR-7 gene and repressing its expression; miR-7 repression alleviates the Bam repression by miR-7, thereby allowing differentiation in the germline stem cell (GSC) lineage. This chain is Protein maelstrom (mael), found in Drosophila erecta (Fruit fly).